Consider the following 482-residue polypeptide: tRNA sulfurtransferase (482 aa).

Residues 61-165 (LAIRDALTRI…DDRLLLIKGR (105 aa)) enclose the THUMP domain. ATP-binding positions include 183–184 (LI), lysine 265, glycine 287, and glutamine 296. A disulfide bond links cysteine 344 and cysteine 456. The 79-residue stretch at 404 to 482 (FGPNDVILDI…GFENVKVYRP (79 aa)) folds into the Rhodanese domain. The Cysteine persulfide intermediate role is filled by cysteine 456.

Belongs to the ThiI family.

It is found in the cytoplasm. The enzyme catalyses [ThiI sulfur-carrier protein]-S-sulfanyl-L-cysteine + a uridine in tRNA + 2 reduced [2Fe-2S]-[ferredoxin] + ATP + H(+) = [ThiI sulfur-carrier protein]-L-cysteine + a 4-thiouridine in tRNA + 2 oxidized [2Fe-2S]-[ferredoxin] + AMP + diphosphate. It carries out the reaction [ThiS sulfur-carrier protein]-C-terminal Gly-Gly-AMP + S-sulfanyl-L-cysteinyl-[cysteine desulfurase] + AH2 = [ThiS sulfur-carrier protein]-C-terminal-Gly-aminoethanethioate + L-cysteinyl-[cysteine desulfurase] + A + AMP + 2 H(+). It functions in the pathway cofactor biosynthesis; thiamine diphosphate biosynthesis. Catalyzes the ATP-dependent transfer of a sulfur to tRNA to produce 4-thiouridine in position 8 of tRNAs, which functions as a near-UV photosensor. Also catalyzes the transfer of sulfur to the sulfur carrier protein ThiS, forming ThiS-thiocarboxylate. This is a step in the synthesis of thiazole, in the thiamine biosynthesis pathway. The sulfur is donated as persulfide by IscS. In Salmonella enteritidis PT4 (strain P125109), this protein is tRNA sulfurtransferase.